A 369-amino-acid chain; its full sequence is Phenylalanine--tRNA ligase alpha subunit (369 aa).

Glutamate 269 is a binding site for Mg(2+).

The protein belongs to the class-II aminoacyl-tRNA synthetase family. Phe-tRNA synthetase alpha subunit type 1 subfamily. As to quaternary structure, tetramer of two alpha and two beta subunits. Mg(2+) is required as a cofactor.

Its subcellular location is the cytoplasm. It catalyses the reaction tRNA(Phe) + L-phenylalanine + ATP = L-phenylalanyl-tRNA(Phe) + AMP + diphosphate + H(+). The chain is Phenylalanine--tRNA ligase alpha subunit from Brucella melitensis biotype 1 (strain ATCC 23456 / CCUG 17765 / NCTC 10094 / 16M).